Reading from the N-terminus, the 279-residue chain is Pantothenate synthetase (279 aa).

31 to 38 (MGNLHGGH) serves as a coordination point for ATP. The active-site Proton donor is His38. Residue Gln62 participates in (R)-pantoate binding. Gln62 lines the beta-alanine pocket. 150-153 (GRKD) contributes to the ATP binding site. Residue Gln156 coordinates (R)-pantoate. ATP-binding positions include Val179 and 187–190 (KSSR).

This sequence belongs to the pantothenate synthetase family. As to quaternary structure, homodimer.

Its subcellular location is the cytoplasm. The catalysed reaction is (R)-pantoate + beta-alanine + ATP = (R)-pantothenate + AMP + diphosphate + H(+). The protein operates within cofactor biosynthesis; (R)-pantothenate biosynthesis; (R)-pantothenate from (R)-pantoate and beta-alanine: step 1/1. Its function is as follows. Catalyzes the condensation of pantoate with beta-alanine in an ATP-dependent reaction via a pantoyl-adenylate intermediate. This chain is Pantothenate synthetase, found in Stenotrophomonas maltophilia (strain K279a).